Reading from the N-terminus, the 235-residue chain is Cobalt transport protein CbiM (235 aa).

6 consecutive transmembrane segments (helical) span residues 6–26 (GVLP…FVVH), 43–63 (LLLA…LPSV), 85–105 (MAFM…HGGI), 108–128 (LGAN…GAYV), 133–153 (LGGP…LSTY), and 181–201 (IFAI…ILLF).

It belongs to the CbiM family. As to quaternary structure, forms an energy-coupling factor (ECF) transporter complex composed of an ATP-binding protein (A component, CbiO), a transmembrane protein (T component, CbiQ) and 2 possible substrate-capture proteins (S components, CbiM and CbiN) of unknown stoichimetry.

The protein localises to the cell membrane. The protein operates within cofactor biosynthesis; adenosylcobalamin biosynthesis. In terms of biological role, part of the energy-coupling factor (ECF) transporter complex CbiMNOQ involved in cobalt import. The sequence is that of Cobalt transport protein CbiM from Propionibacterium freudenreichii subsp. shermanii (strain ATCC 9614 / DSM 4902 / CIP 103027 / NCIMB 8099 / CIRM-BIA1).